The sequence spans 275 residues: Hydroxyethylthiazole kinase (275 aa).

Met-53 contributes to the substrate binding site. Arg-128 and Ser-174 together coordinate ATP. Gly-201 is a binding site for substrate.

Belongs to the Thz kinase family. It depends on Mg(2+) as a cofactor.

It carries out the reaction 5-(2-hydroxyethyl)-4-methylthiazole + ATP = 4-methyl-5-(2-phosphooxyethyl)-thiazole + ADP + H(+). It participates in cofactor biosynthesis; thiamine diphosphate biosynthesis; 4-methyl-5-(2-phosphoethyl)-thiazole from 5-(2-hydroxyethyl)-4-methylthiazole: step 1/1. In terms of biological role, catalyzes the phosphorylation of the hydroxyl group of 4-methyl-5-beta-hydroxyethylthiazole (THZ). The chain is Hydroxyethylthiazole kinase from Kineococcus radiotolerans (strain ATCC BAA-149 / DSM 14245 / SRS30216).